The following is a 136-amino-acid chain: Sec-independent protein translocase protein TatB (136 aa).

The helical transmembrane segment at 1-21 (MFDIGFWELVLISVIGLVVLG) threads the bilayer. Residues 66–136 (ASKQGLSDLD…TTPPRQDKNE (71 aa)) form a disordered region. Basic and acidic residues-rich tracts occupy residues 77–89 (ELQK…KETA) and 96–107 (YKKDIDDIKTSL). Residues 108 to 130 (DKNPSGTTQQENSILDSSKTTPP) are compositionally biased toward polar residues.

This sequence belongs to the TatB family. As to quaternary structure, the Tat system comprises two distinct complexes: a TatABC complex, containing multiple copies of TatA, TatB and TatC subunits, and a separate TatA complex, containing only TatA subunits. Substrates initially bind to the TatABC complex, which probably triggers association of the separate TatA complex to form the active translocon.

It is found in the cell inner membrane. Part of the twin-arginine translocation (Tat) system that transports large folded proteins containing a characteristic twin-arginine motif in their signal peptide across membranes. Together with TatC, TatB is part of a receptor directly interacting with Tat signal peptides. TatB may form an oligomeric binding site that transiently accommodates folded Tat precursor proteins before their translocation. The protein is Sec-independent protein translocase protein TatB of Psychromonas ingrahamii (strain DSM 17664 / CCUG 51855 / 37).